Reading from the N-terminus, the 269-residue chain is Cytochrome c oxidase subunit 3 (269 aa).

A run of 7 helical transmembrane segments spans residues 21 to 41 (PWPIVVSFALMSLALSLALTM), 45 to 65 (IGHMYLIYLSILTVTLSATLW), 90 to 110 (GFLLFVVSEILIFAALFWAYF), 138 to 160 (PLLNTIILLSSGATITYSHHGLV), 167 to 187 (ALSGLLITFWLIVIFVTCQYI), 205 to 225 (FYAGTGLHFLHMVMLAAMLGI), and 247 to 267 (VLYCHILDIIWLFLYIVFYWW).

The protein belongs to the cytochrome c oxidase subunit 3 family. As to quaternary structure, component of the cytochrome c oxidase (complex IV, CIV), a multisubunit enzyme composed of a catalytic core of 3 subunits and several supernumerary subunits. The complex exists as a monomer or a dimer and forms supercomplexes (SCs) in the inner mitochondrial membrane with ubiquinol-cytochrome c oxidoreductase (cytochrome b-c1 complex, complex III, CIII).

Its subcellular location is the mitochondrion inner membrane. The catalysed reaction is 4 Fe(II)-[cytochrome c] + O2 + 8 H(+)(in) = 4 Fe(III)-[cytochrome c] + 2 H2O + 4 H(+)(out). In terms of biological role, component of the cytochrome c oxidase, the last enzyme in the mitochondrial electron transport chain which drives oxidative phosphorylation. The respiratory chain contains 3 multisubunit complexes succinate dehydrogenase (complex II, CII), ubiquinol-cytochrome c oxidoreductase (cytochrome b-c1 complex, complex III, CIII) and cytochrome c oxidase (complex IV, CIV), that cooperate to transfer electrons derived from NADH and succinate to molecular oxygen, creating an electrochemical gradient over the inner membrane that drives transmembrane transport and the ATP synthase. Cytochrome c oxidase is the component of the respiratory chain that catalyzes the reduction of oxygen to water. Electrons originating from reduced cytochrome c in the intermembrane space (IMS) are transferred via the dinuclear copper A center (CU(A)) of subunit 2 and heme A of subunit 1 to the active site in subunit 1, a binuclear center (BNC) formed by heme A3 and copper B (CU(B)). The BNC reduces molecular oxygen to 2 water molecules using 4 electrons from cytochrome c in the IMS and 4 protons from the mitochondrial matrix. The protein is Cytochrome c oxidase subunit 3 (COX3) of Kluyveromyces lactis (strain ATCC 8585 / CBS 2359 / DSM 70799 / NBRC 1267 / NRRL Y-1140 / WM37) (Yeast).